The chain runs to 208 residues: UPF0301 protein MAB_4928c (208 aa).

The protein belongs to the UPF0301 (AlgH) family.

The polypeptide is UPF0301 protein MAB_4928c (Mycobacteroides abscessus (strain ATCC 19977 / DSM 44196 / CCUG 20993 / CIP 104536 / JCM 13569 / NCTC 13031 / TMC 1543 / L948) (Mycobacterium abscessus)).